Consider the following 106-residue polypeptide: Stress-responsive protein 1 (106 aa).

It is found in the mitochondrion. In terms of biological role, stress-responsive protein that may play a role in regulation of cell cycle. The polypeptide is Stress-responsive protein 1 (sro1) (Schizosaccharomyces pombe (strain 972 / ATCC 24843) (Fission yeast)).